A 475-amino-acid polypeptide reads, in one-letter code: Ribulose bisphosphate carboxylase large chain (475 aa).

Positions 1–2 (MS) are excised as a propeptide. Pro3 carries the post-translational modification N-acetylproline. Residue Lys14 is modified to N6,N6,N6-trimethyllysine. Substrate is bound by residues Asn123 and Thr173. Catalysis depends on Lys175, which acts as the Proton acceptor. Residue Lys177 participates in substrate binding. Residues Lys201, Asp203, and Glu204 each coordinate Mg(2+). Lys201 is modified (N6-carboxylysine). The active-site Proton acceptor is the His294. Substrate-binding residues include Arg295, His327, and Ser379.

This sequence belongs to the RuBisCO large chain family. Type I subfamily. Heterohexadecamer of 8 large chains and 8 small chains; disulfide-linked. The disulfide link is formed within the large subunit homodimers. Mg(2+) is required as a cofactor. The disulfide bond which can form in the large chain dimeric partners within the hexadecamer appears to be associated with oxidative stress and protein turnover.

The protein localises to the plastid. It localises to the chloroplast. The enzyme catalyses 2 (2R)-3-phosphoglycerate + 2 H(+) = D-ribulose 1,5-bisphosphate + CO2 + H2O. It carries out the reaction D-ribulose 1,5-bisphosphate + O2 = 2-phosphoglycolate + (2R)-3-phosphoglycerate + 2 H(+). RuBisCO catalyzes two reactions: the carboxylation of D-ribulose 1,5-bisphosphate, the primary event in carbon dioxide fixation, as well as the oxidative fragmentation of the pentose substrate in the photorespiration process. Both reactions occur simultaneously and in competition at the same active site. The protein is Ribulose bisphosphate carboxylase large chain of Ostrya virginiana (American hophornbeam).